The primary structure comprises 94 residues: Progonadoliberin-1 (94 aa).

Positions 1 to 22 are cleaved as a signal peptide; that stretch reads MAAKILALWLLLAGTVFPQGCC. Gln23 carries the pyrrolidone carboxylic acid modification. A Glycine amide modification is found at Gly32.

The protein belongs to the GnRH family. Synthesized in preoptic neurons and is transported to the pituitary in the preoptic-hypophyseal axons.

The protein localises to the secreted. In terms of biological role, stimulates the secretion of gonadotropins. May be responsible for the regulation of the hypothalamic-pituitary-gonadal axis. This chain is Progonadoliberin-1 (gnrh1), found in Haplochromis burtoni (Burton's mouthbrooder).